The following is a 1363-amino-acid chain: Vascular endothelial growth factor receptor 3 (1363 aa).

Positions 1–24 (MQPGAALNRRLWLCLGLLQGLANG) are cleaved as a signal peptide. The Extracellular portion of the chain corresponds to 25 to 775 (YSMTPPTLNI…EGSEDKGSME (751 aa)). Residues asparagine 33, asparagine 104, asparagine 166, asparagine 251, asparagine 299, and asparagine 411 are each glycosylated (N-linked (GlcNAc...) asparagine). Ig-like C2-type domains follow at residues 44–118 (GDSL…YIKA), 151–213 (KDSM…WGDQ), 230–326 (YDIQ…TEVI), 331–415 (PFIS…ISLE), 422–552 (PHIH…FYVT), 555–671 (PDGF…KYLS), and 678–764 (PRLT…ASVA). Disulfide bonds link cysteine 51-cysteine 111 and cysteine 158-cysteine 206. Cysteine 252 and cysteine 310 are oxidised to a cystine. Cystine bridges form between cysteine 445–cysteine 534, cysteine 466–cysteine 486, and cysteine 578–cysteine 653. 5 N-linked (GlcNAc...) asparagine glycosylation sites follow: asparagine 515, asparagine 527, asparagine 582, asparagine 594, and asparagine 683. Cysteine 699 and cysteine 751 are joined by a disulfide. N-linked (GlcNAc...) asparagine glycosylation is present at asparagine 758. A helical membrane pass occupies residues 776–796 (IVILIGTGVIAVFFWVLLLLI). Topologically, residues 797–1363 (FCNMKRPAHA…GSTFFADSNY (567 aa)) are cytoplasmic. Phosphotyrosine; by SRC is present on residues tyrosine 830 and tyrosine 833. The Protein kinase domain occupies 845-1173 (LHLGRVLGHG…DLVEILGDLL (329 aa)). ATP-binding positions include 851–859 (LGHGAFGKV) and lysine 879. Aspartate 1037 (proton acceptor) is an active-site residue. Tyrosine 1063 carries the phosphotyrosine; by autocatalysis and SRC modification. Phosphotyrosine; by autocatalysis is present on residues tyrosine 1068, tyrosine 1230, tyrosine 1231, and tyrosine 1265. Residues 1289 to 1317 (SRHRQEGSFSRKDPGQHMDISRGHPDLQG) show a composition bias toward basic and acidic residues. Positions 1289–1330 (SRHRQEGSFSRKDPGQHMDISRGHPDLQGRRRRPTQGAQGGK) are disordered. A phosphotyrosine; by autocatalysis and SRC mark is found at tyrosine 1333 and tyrosine 1337. Residue tyrosine 1363 is modified to Phosphotyrosine; by autocatalysis.

It belongs to the protein kinase superfamily. Tyr protein kinase family. CSF-1/PDGF receptor subfamily. In terms of assembly, interacts with VEGFC and VEGFD. Monomer in the absence of bound VEGFC or VEGFD. Homodimer in the presence of bound VEGFC or VEGFD. Can also form a heterodimer with KDR. Interacts with PTPN14; the interaction is enhanced by stimulation with VEGFC. Interacts with CRK, GRB2, PTK2/FAK1, SHC1, PIK3R1 and PTPN11/SHP-2. Identified in a complex with SRC and ITGB1. Identified in a complex with SRC and ITGB1. Autophosphorylated on tyrosine residues upon ligand binding. Autophosphorylation occurs in trans, i.e. one subunit of the dimeric receptor phosphorylates tyrosine residues on the other subunit. Phosphorylation in response to H(2)O(2) is mediated by a process that requires SRC and PRKCD activity. Phosphorylation at Tyr-1068 is required for autophosphorylation at additional tyrosine residues. Phosphorylation at Tyr-1063 and Tyr-1337 is important for interaction with CRK and subsequent activation of MAPK8. Phosphorylation at Tyr-1230, Tyr-1231 and Tyr-1337 is important for interaction with GRB2 and subsequent activation of the AKT1 and MAPK1/ERK2 and/or MAPK3/ERK1 signaling pathways. In response to endothelial cell adhesion onto collagen, can also be phosphorylated in the absence of FLT4 kinase activity by SRC.

Its subcellular location is the cell membrane. The protein resides in the cytoplasm. The protein localises to the nucleus. The catalysed reaction is L-tyrosyl-[protein] + ATP = O-phospho-L-tyrosyl-[protein] + ADP + H(+). Its activity is regulated as follows. Present in an inactive conformation in the absence of bound ligand. Binding of VEGFC or VEGFD leads to dimerization and activation by autophosphorylation on tyrosine residues. In terms of biological role, tyrosine-protein kinase that acts as a cell-surface receptor for VEGFC and VEGFD, and plays an essential role in adult lymphangiogenesis and in the development of the vascular network and the cardiovascular system during embryonic development. Promotes proliferation, survival and migration of endothelial cells, and regulates angiogenic sprouting. Signaling by activated FLT4 leads to enhanced production of VEGFC, and to a lesser degree VEGFA, thereby creating a positive feedback loop that enhances FLT4 signaling. Modulates KDR signaling by forming heterodimers. Mediates activation of the MAPK1/ERK2, MAPK3/ERK1 signaling pathway, of MAPK8 and the JUN signaling pathway, and of the AKT1 signaling pathway. Phosphorylates SHC1. Mediates phosphorylation of PIK3R1, the regulatory subunit of phosphatidylinositol 3-kinase. Promotes phosphorylation of MAPK8 at 'Thr-183' and 'Tyr-185', and of AKT1 at 'Ser-473'. The polypeptide is Vascular endothelial growth factor receptor 3 (Flt4) (Rattus norvegicus (Rat)).